The sequence spans 227 residues: Cytochrome c oxidase subunit 2 (227 aa).

Over 1–14 the chain is Mitochondrial intermembrane; it reads MALPFQLGFQDATS. A helical membrane pass occupies residues 15 to 45; sequence PIMEELLHFHDHTLMIVFMISSLVLYLISSM. Residues 46–59 are Mitochondrial matrix-facing; that stretch reads LTTRLTHTSTMDAQ. Residues 60–87 traverse the membrane as a helical segment; that stretch reads EVETIWTILPAIILITIALPSLRILYMM. Over 88 to 227 the chain is Mitochondrial intermembrane; that stretch reads DEINNPSMTI…CFEKWSTSML (140 aa). 6 residues coordinate Cu cation: histidine 161, cysteine 196, glutamate 198, cysteine 200, histidine 204, and methionine 207. Mg(2+) is bound at residue glutamate 198.

This sequence belongs to the cytochrome c oxidase subunit 2 family. Component of the cytochrome c oxidase (complex IV, CIV), a multisubunit enzyme composed of 14 subunits. The complex is composed of a catalytic core of 3 subunits MT-CO1, MT-CO2 and MT-CO3, encoded in the mitochondrial DNA, and 11 supernumerary subunits COX4I, COX5A, COX5B, COX6A, COX6B, COX6C, COX7A, COX7B, COX7C, COX8 and NDUFA4, which are encoded in the nuclear genome. The complex exists as a monomer or a dimer and forms supercomplexes (SCs) in the inner mitochondrial membrane with NADH-ubiquinone oxidoreductase (complex I, CI) and ubiquinol-cytochrome c oxidoreductase (cytochrome b-c1 complex, complex III, CIII), resulting in different assemblies (supercomplex SCI(1)III(2)IV(1) and megacomplex MCI(2)III(2)IV(2)). Found in a complex with TMEM177, COA6, COX18, COX20, SCO1 and SCO2. Interacts with TMEM177 in a COX20-dependent manner. Interacts with COX20. Interacts with COX16. Requires Cu cation as cofactor.

Its subcellular location is the mitochondrion inner membrane. It carries out the reaction 4 Fe(II)-[cytochrome c] + O2 + 8 H(+)(in) = 4 Fe(III)-[cytochrome c] + 2 H2O + 4 H(+)(out). Component of the cytochrome c oxidase, the last enzyme in the mitochondrial electron transport chain which drives oxidative phosphorylation. The respiratory chain contains 3 multisubunit complexes succinate dehydrogenase (complex II, CII), ubiquinol-cytochrome c oxidoreductase (cytochrome b-c1 complex, complex III, CIII) and cytochrome c oxidase (complex IV, CIV), that cooperate to transfer electrons derived from NADH and succinate to molecular oxygen, creating an electrochemical gradient over the inner membrane that drives transmembrane transport and the ATP synthase. Cytochrome c oxidase is the component of the respiratory chain that catalyzes the reduction of oxygen to water. Electrons originating from reduced cytochrome c in the intermembrane space (IMS) are transferred via the dinuclear copper A center (CU(A)) of subunit 2 and heme A of subunit 1 to the active site in subunit 1, a binuclear center (BNC) formed by heme A3 and copper B (CU(B)). The BNC reduces molecular oxygen to 2 water molecules using 4 electrons from cytochrome c in the IMS and 4 protons from the mitochondrial matrix. In Phyllostomus hastatus (Greater spear-nosed bat), this protein is Cytochrome c oxidase subunit 2 (MT-CO2).